A 253-amino-acid polypeptide reads, in one-letter code: Glucosamine-6-phosphate deaminase (253 aa).

D67 acts as the Proton acceptor; for enolization step in catalysis. N136 serves as the catalytic For ring-opening step. Residue H138 is the Proton acceptor; for ring-opening step of the active site. The For ring-opening step role is filled by E143.

Belongs to the glucosamine/galactosamine-6-phosphate isomerase family. NagB subfamily.

The catalysed reaction is alpha-D-glucosamine 6-phosphate + H2O = beta-D-fructose 6-phosphate + NH4(+). It participates in amino-sugar metabolism; N-acetylneuraminate degradation; D-fructose 6-phosphate from N-acetylneuraminate: step 5/5. In terms of biological role, catalyzes the reversible isomerization-deamination of glucosamine 6-phosphate (GlcN6P) to form fructose 6-phosphate (Fru6P) and ammonium ion. This chain is Glucosamine-6-phosphate deaminase, found in Thermoanaerobacter sp. (strain X514).